The following is a 784-amino-acid chain: ATP-dependent zinc metalloprotease FTSH 9, chloroplastic/mitochondrial (784 aa).

3 stretches are compositionally biased toward low complexity: residues 1-12 (MSALQASLLLRP), 24-34 (PLPSSSASFPR), and 42-53 (PLPLRALASEGP). A chloroplast and mitochondrion-targeting transit peptide spans 1-47 (MSALQASLLLRPLPSPLPPRRRLPLPSSSASFPRAGHHRRLPLPLRA). The disordered stretch occupies residues 1-71 (MSALQASLLL…DPPPPELPAA (71 aa)). The span at 54-69 (QPAPSPAPDPPPPELP) shows a compositional bias: pro residues. The next 2 helical transmembrane spans lie at 104-124 (WVLA…DWVV) and 267-287 (IFST…GAAA). An ATP-binding site is contributed by 368–375 (GSPGTGKT). Histidine 601 is a Zn(2+) binding site. Residue glutamate 602 is part of the active site. Zn(2+) contacts are provided by histidine 605 and aspartate 679.

This sequence in the N-terminal section; belongs to the AAA ATPase family. It in the C-terminal section; belongs to the peptidase M41 family. It depends on Zn(2+) as a cofactor.

The protein resides in the mitochondrion membrane. It localises to the plastid. It is found in the chloroplast thylakoid membrane. Its function is as follows. Probable ATP-dependent zinc metallopeptidase. This is ATP-dependent zinc metalloprotease FTSH 9, chloroplastic/mitochondrial (FTSH9) from Oryza sativa subsp. japonica (Rice).